The sequence spans 89 residues: Small ribosomal subunit protein uS15 (89 aa).

This sequence belongs to the universal ribosomal protein uS15 family. Part of the 30S ribosomal subunit. Forms a bridge to the 50S subunit in the 70S ribosome, contacting the 23S rRNA.

Functionally, one of the primary rRNA binding proteins, it binds directly to 16S rRNA where it helps nucleate assembly of the platform of the 30S subunit by binding and bridging several RNA helices of the 16S rRNA. Its function is as follows. Forms an intersubunit bridge (bridge B4) with the 23S rRNA of the 50S subunit in the ribosome. This Escherichia coli O157:H7 protein is Small ribosomal subunit protein uS15.